Reading from the N-terminus, the 251-residue chain is CDP-diacylglycerol pyrophosphatase (251 aa).

A helical membrane pass occupies residues 5–25; that stretch reads GYFLLAVIVIVAAAGVGYWKF.

It belongs to the Cdh family.

The protein localises to the cell inner membrane. It catalyses the reaction a CDP-1,2-diacyl-sn-glycerol + H2O = a 1,2-diacyl-sn-glycero-3-phosphate + CMP + 2 H(+). It functions in the pathway phospholipid metabolism; CDP-diacylglycerol degradation; phosphatidate from CDP-diacylglycerol: step 1/1. The protein is CDP-diacylglycerol pyrophosphatase of Salmonella enteritidis PT4 (strain P125109).